Reading from the N-terminus, the 317-residue chain is Malate dehydrogenase (317 aa).

NAD(+) is bound by residues 10-15 and Asp-34; that span reads GGGQIG. Residues Arg-83 and Arg-89 each coordinate substrate. Residues Asn-96 and 119 to 121 contribute to the NAD(+) site; that span reads ISN. The substrate site is built by Asn-121 and Arg-152. The active-site Proton acceptor is His-176.

Belongs to the LDH/MDH superfamily. MDH type 3 family.

The enzyme catalyses (S)-malate + NAD(+) = oxaloacetate + NADH + H(+). Its function is as follows. Catalyzes the reversible oxidation of malate to oxaloacetate. This is Malate dehydrogenase from Geobacter metallireducens (strain ATCC 53774 / DSM 7210 / GS-15).